Here is a 496-residue protein sequence, read N- to C-terminus: Transmembrane transporter swnT (496 aa).

Helical transmembrane passes span 40–60 (LSAI…PLIL), 72–92 (VFWG…TLAE), 124–144 (AMIS…SVPL), 162–182 (WMGF…ACFE), and 191–211 (AFLL…FAMA). N-linked (GlcNAc...) asparagine glycosylation occurs at asparagine 225. 6 helical membrane-spanning segments follow: residues 270–290 (LLWT…AVLV), 314–334 (AAAI…VWSI), 368–388 (PIWS…LYLA), 396–416 (LIAT…VLVL), 434–454 (GLVA…FYCF), and 467–487 (YVSG…ILYA).

The protein belongs to the amino acid-polyamine-organocation (APC) superfamily. Amino acid/choline transporter (ACT) (TC 2.A.3.4) family.

The protein localises to the membrane. Transmembrane transporter; part of the gene cluster that mediates the biosynthesis of swainsonine, a cytotoxic fungal alkaloid and a potential cancer therapy drug. Does not mediate the secretion of SW and the exact role of swnT in SW biosynthesis remains to be determined. The polypeptide is Transmembrane transporter swnT (Metarhizium robertsii (strain ARSEF 23 / ATCC MYA-3075) (Metarhizium anisopliae (strain ARSEF 23))).